Reading from the N-terminus, the 279-residue chain is Ribosomal RNA small subunit methyltransferase J (279 aa).

S-adenosyl-L-methionine contacts are provided by residues 138–139 (ER) and Asp194.

It belongs to the methyltransferase superfamily. RsmJ family.

The protein resides in the cytoplasm. The catalysed reaction is guanosine(1516) in 16S rRNA + S-adenosyl-L-methionine = N(2)-methylguanosine(1516) in 16S rRNA + S-adenosyl-L-homocysteine + H(+). In terms of biological role, specifically methylates the guanosine in position 1516 of 16S rRNA. The chain is Ribosomal RNA small subunit methyltransferase J from Acinetobacter baumannii (strain ACICU).